Reading from the N-terminus, the 699-residue chain is tRNA 5-methylaminomethyl-2-thiouridine biosynthesis bifunctional protein MnmC (699 aa).

The segment at 1–260 is tRNA (mnm(5)s(2)U34)-methyltransferase; the sequence is MTAKPQKSCQ…ERKLLRQQAD (260 aa). The FAD-dependent cmnm(5)s(2)U34 oxidoreductase stretch occupies residues 282-699; that stretch reads VGGGLASANL…LRKLLKGKAL (418 aa).

The protein in the N-terminal section; belongs to the methyltransferase superfamily. tRNA (mnm(5)s(2)U34)-methyltransferase family. This sequence in the C-terminal section; belongs to the DAO family. It depends on FAD as a cofactor.

Its subcellular location is the cytoplasm. The enzyme catalyses 5-aminomethyl-2-thiouridine(34) in tRNA + S-adenosyl-L-methionine = 5-methylaminomethyl-2-thiouridine(34) in tRNA + S-adenosyl-L-homocysteine + H(+). In terms of biological role, catalyzes the last two steps in the biosynthesis of 5-methylaminomethyl-2-thiouridine (mnm(5)s(2)U) at the wobble position (U34) in tRNA. Catalyzes the FAD-dependent demodification of cmnm(5)s(2)U34 to nm(5)s(2)U34, followed by the transfer of a methyl group from S-adenosyl-L-methionine to nm(5)s(2)U34, to form mnm(5)s(2)U34. The protein is tRNA 5-methylaminomethyl-2-thiouridine biosynthesis bifunctional protein MnmC of Shewanella sp. (strain MR-4).